The following is a 428-amino-acid chain: UPF0229 protein YeaH (428 aa).

Basic and acidic residues predominate over residues 77–90 (PGNDHFIQNDRIER). Positions 77–111 (PGNDHFIQNDRIERPQSGGGGGSGSGQGQASQDGE) are disordered. Over residues 93–103 (SGGGGGSGSGQ) the composition is skewed to gly residues.

The protein belongs to the UPF0229 family.

The protein is UPF0229 protein YeaH of Salmonella typhi.